The chain runs to 86 residues: MEPVDPRLEPWKHPGSQPKTACTNCYCKKCCFHCQVCFITKALGISYGRKKRRQRRRAHQNSQTHQASLSKQPTSQPRGDPTGPKE.

Residues 1–24 (MEPVDPRLEPWKHPGSQPKTACTN) form an interaction with human CREBBP region. The interval 1–48 (MEPVDPRLEPWKHPGSQPKTACTNCYCKKCCFHCQVCFITKALGISYG) is transactivation. Zn(2+) is bound by residues Cys22, Cys25, and Cys27. The tract at residues 22–37 (CTNCYCKKCCFHCQVC) is cysteine-rich. The residue at position 28 (Lys28) is an N6-acetyllysine; by host PCAF. The Zn(2+) site is built by Cys30, His33, Cys34, and Cys37. The core stretch occupies residues 38–48 (FITKALGISYG). The span at 48-59 (GRKKRRQRRRAH) shows a compositional bias: basic residues. Residues 48-86 (GRKKRRQRRRAHQNSQTHQASLSKQPTSQPRGDPTGPKE) are disordered. A Nuclear localization signal, RNA-binding (TAR), and protein transduction motif is present at residues 49–57 (RKKRRQRRR). The tract at residues 49–86 (RKKRRQRRRAHQNSQTHQASLSKQPTSQPRGDPTGPKE) is interaction with the host capping enzyme RNGTT. 2 positions are modified to N6-acetyllysine; by host EP300 and GCN5L2: Lys50 and Lys51. Asymmetric dimethylarginine; by host PRMT6 is present on residues Arg52 and Arg53. Residues 60-77 (QNSQTHQASLSKQPTSQP) are compositionally biased toward polar residues. Residue Lys71 forms a Glycyl lysine isopeptide (Lys-Gly) (interchain with G-Cter in ubiquitin) linkage. Positions 78 to 80 (RGD) match the Cell attachment site motif.

Belongs to the lentiviruses Tat family. As to quaternary structure, interacts with host CCNT1. Associates with the P-TEFb complex composed at least of Tat, P-TEFb (CDK9 and CCNT1), TAR RNA, RNA Pol II. Recruits the HATs CREBBP, TAF1/TFIID, EP300, PCAF and GCN5L2. Interacts with host KAT5/Tip60; this interaction targets the latter to degradation. Interacts with the host deacetylase SIRT1. Interacts with host capping enzyme RNGTT; this interaction stimulates RNGTT. Binds to host KDR, and to the host integrins ITGAV/ITGB3 and ITGA5/ITGB1. Interacts with host KPNB1/importin beta-1 without previous binding to KPNA1/importin alpha-1. Interacts with EIF2AK2. Interacts with host nucleosome assembly protein NAP1L1; this interaction may be required for the transport of Tat within the nucleus, since the two proteins interact at the nuclear rim. Interacts with host C1QBP/SF2P32; this interaction involves lysine-acetylated Tat. Interacts with the host chemokine receptors CCR2, CCR3 and CXCR4. Interacts with host DPP4/CD26; this interaction may trigger an anti-proliferative effect. Interacts with host LDLR. Interacts with the host extracellular matrix metalloproteinase MMP1. Interacts with host PRMT6; this interaction mediates Tat's methylation. Interacts with, and is ubiquitinated by MDM2/Hdm2. Interacts with host PSMC3 and HTATIP2. Interacts with STAB1; this interaction may overcome SATB1-mediated repression of IL2 and IL2RA (interleukin) in T cells by binding to the same domain than HDAC1. Interacts (when acetylated) with human CDK13, thereby increasing HIV-1 mRNA splicing and promoting the production of the doubly spliced HIV-1 protein Nef. Interacts with host TBP; this interaction modulates the activity of transcriptional pre-initiation complex. Interacts with host RELA. Interacts with host PLSCR1; this interaction negatively regulates Tat transactivation activity by altering its subcellular distribution. In terms of processing, asymmetrical arginine methylation by host PRMT6 seems to diminish the transactivation capacity of Tat and affects the interaction with host CCNT1. Acetylation by EP300, CREBBP, GCN5L2/GCN5 and PCAF regulates the transactivation activity of Tat. EP300-mediated acetylation of Lys-50 promotes dissociation of Tat from the TAR RNA through the competitive binding to PCAF's bromodomain. In addition, the non-acetylated Tat's N-terminus can also interact with PCAF. PCAF-mediated acetylation of Lys-28 enhances Tat's binding to CCNT1. Lys-50 is deacetylated by SIRT1. Post-translationally, polyubiquitination by host MDM2 does not target Tat to degradation, but activates its transactivation function and fosters interaction with CCNT1 and TAR RNA. In terms of processing, phosphorylated by EIF2AK2 on serine and threonine residues adjacent to the basic region important for TAR RNA binding and function. Phosphorylation of Tat by EIF2AK2 is dependent on the prior activation of EIF2AK2 by dsRNA.

It localises to the host nucleus. Its subcellular location is the host nucleolus. The protein resides in the host cytoplasm. It is found in the secreted. Functionally, transcriptional activator that increases RNA Pol II processivity, thereby increasing the level of full-length viral transcripts. Recognizes a hairpin structure at the 5'-LTR of the nascent viral mRNAs referred to as the transactivation responsive RNA element (TAR) and recruits the cyclin T1-CDK9 complex (P-TEFb complex) that will in turn hyperphosphorylate the RNA polymerase II to allow efficient elongation. The CDK9 component of P-TEFb and other Tat-activated kinases hyperphosphorylate the C-terminus of RNA Pol II that becomes stabilized and much more processive. Other factors such as HTATSF1/Tat-SF1, SUPT5H/SPT5, and HTATIP2 are also important for Tat's function. Besides its effect on RNA Pol II processivity, Tat induces chromatin remodeling of proviral genes by recruiting the histone acetyltransferases (HATs) CREBBP, EP300 and PCAF to the chromatin. This also contributes to the increase in proviral transcription rate, especially when the provirus integrates in transcriptionally silent region of the host genome. To ensure maximal activation of the LTR, Tat mediates nuclear translocation of NF-kappa-B by interacting with host RELA. Through its interaction with host TBP, Tat may also modulate transcription initiation. Tat can reactivate a latently infected cell by penetrating in it and transactivating its LTR promoter. In the cytoplasm, Tat is thought to act as a translational activator of HIV-1 mRNAs. Extracellular circulating Tat can be endocytosed by surrounding uninfected cells via the binding to several surface receptors such as CD26, CXCR4, heparan sulfate proteoglycans (HSPG) or LDLR. Neurons are rarely infected, but they internalize Tat via their LDLR. Through its interaction with nuclear HATs, Tat is potentially able to control the acetylation-dependent cellular gene expression. Modulates the expression of many cellular genes involved in cell survival, proliferation or in coding for cytokines or cytokine receptors. Tat plays a role in T-cell and neurons apoptosis. Tat induced neurotoxicity and apoptosis probably contribute to neuroAIDS. Circulating Tat also acts as a chemokine-like and/or growth factor-like molecule that binds to specific receptors on the surface of the cells, affecting many cellular pathways. In the vascular system, Tat binds to ITGAV/ITGB3 and ITGA5/ITGB1 integrins dimers at the surface of endothelial cells and competes with bFGF for heparin-binding sites, leading to an excess of soluble bFGF. This Homo sapiens (Human) protein is Protein Tat.